Here is a 230-residue protein sequence, read N- to C-terminus: Inactive L-threonine 3-dehydrogenase, mitochondrial (230 aa).

The protein belongs to the NAD(P)-dependent epimerase/dehydratase family. As to expression, expressed in all tissues examined. Detected in most cell types examined, but not observed in endothelial cells, glioma cell lines and some leukemia cell lines.

It localises to the mitochondrion. This Homo sapiens (Human) protein is Inactive L-threonine 3-dehydrogenase, mitochondrial.